A 242-amino-acid chain; its full sequence is Probable transcriptional regulatory protein LSL_0422 (242 aa).

Residues 1-21 (MSGHSKWHNIQGRKNAQDAKR) are disordered.

It belongs to the TACO1 family.

The protein localises to the cytoplasm. The protein is Probable transcriptional regulatory protein LSL_0422 of Ligilactobacillus salivarius (strain UCC118) (Lactobacillus salivarius).